The chain runs to 179 residues: Large ribosomal subunit protein uL5 (179 aa).

It belongs to the universal ribosomal protein uL5 family. Part of the 50S ribosomal subunit; part of the 5S rRNA/L5/L18/L25 subcomplex. Contacts the 5S rRNA and the P site tRNA. Forms a bridge to the 30S subunit in the 70S ribosome.

Functionally, this is one of the proteins that bind and probably mediate the attachment of the 5S RNA into the large ribosomal subunit, where it forms part of the central protuberance. In the 70S ribosome it contacts protein S13 of the 30S subunit (bridge B1b), connecting the 2 subunits; this bridge is implicated in subunit movement. Contacts the P site tRNA; the 5S rRNA and some of its associated proteins might help stabilize positioning of ribosome-bound tRNAs. The protein is Large ribosomal subunit protein uL5 of Geobacter sp. (strain M21).